The primary structure comprises 369 residues: Choline kinase B2 (369 aa).

This sequence belongs to the choline/ethanolamine kinase family. Mg(2+) serves as cofactor.

It carries out the reaction choline + ATP = phosphocholine + ADP + H(+). Its pathway is phospholipid metabolism; phosphatidylcholine biosynthesis; phosphocholine from choline: step 1/1. Its function is as follows. Catalyzes the first step in phosphatidylcholine biosynthesis. Phosphorylates choline. In Caenorhabditis elegans, this protein is Choline kinase B2 (ckb-2).